The following is a 302-amino-acid chain: Vacuolar iron transporter (302 aa).

Residues 1-70 (MPASGAGYAG…HTNTSSDYVK (70 aa)) lie on the Cytoplasmic side of the membrane. Residues 71 to 91 (AVVFGGLDGIVTIFAIVAGCV) form a helical membrane-spanning segment. The Vacuolar portion of the chain corresponds to 92 to 99 (GADLSCSQ). The helical transmembrane segment at 100-120 (VLMVGLGNLLADAISMGFGEY) threads the bilayer. Residues 121 to 211 (VSAAAEKDFV…IKRGLVMFTA (91 aa)) lie on the Cytoplasmic side of the membrane. Residues glutamate 137, glutamate 140, glutamate 148, glutamate 151, methionine 185, and glutamate 189 each coordinate Fe cation. The chain crosses the membrane as a helical span at residues 212-232 (FCFFGLLPLAGFIGWVAAFGL). Residues 233–235 (GAE) lie on the Vacuolar side of the membrane. Residues 236 to 256 (ADMAFLMACVVSIMTLFILGF) traverse the membrane as a helical segment. Residues 257 to 276 (SKGKFVGQNPTKSACLMAMN) lie on the Cytoplasmic side of the membrane. A helical membrane pass occupies residues 277–297 (GGCAGTVAYGVGSLLQLVVGA). At 298–302 (NLTAA) the chain is on the vacuolar side.

The protein belongs to the CCC1 family.

The protein localises to the vacuole membrane. The catalysed reaction is Fe(2+)(in) = Fe(2+)(out). Vacuolar iron transporter involved in the transfer of iron ions from the cytosol to the vacuole for intracellular iron storage. Plays an essential role in detoxification of excess iron. Important for parasite survival within macrophages and parasite virulence in vivo. The chain is Vacuolar iron transporter from Toxoplasma gondii (strain ATCC 50861 / VEG).